The sequence spans 224 residues: Cysteine-rich hydrophobic domain-containing protein 1 (224 aa).

Residues 1–80 (MSILLPNMAE…PPPRVVSEEH (80 aa)) are disordered. Positions 13 to 25 (TISELEEEEEEEA) are enriched in acidic residues. Residues 26–40 (ATSSSSPSSSSSVSG) are compositionally biased toward low complexity. Over residues 41-69 (PDDDEEDEEEEEEEEEEEEEEEEEEEEEA) the composition is skewed to acidic residues. Positions 42–70 (DDDEEDEEEEEEEEEEEEEEEEEEEEEAP) form a coiled coil.

Belongs to the CHIC family. Palmitoylated. In terms of tissue distribution, equally expressed in various parts of the brain.

Its subcellular location is the cell membrane. It localises to the cytoplasmic vesicle. This Homo sapiens (Human) protein is Cysteine-rich hydrophobic domain-containing protein 1 (CHIC1).